The primary structure comprises 123 residues: Small ribosomal subunit protein uS13 (123 aa).

The interval 89-123 is disordered; that stretch reads GRRHRSGLPVRGQRTRTNARTRKGKRKAVAKKKAK. Basic residues predominate over residues 101–123; it reads QRTRTNARTRKGKRKAVAKKKAK.

This sequence belongs to the universal ribosomal protein uS13 family. As to quaternary structure, part of the 30S ribosomal subunit. Forms a loose heterodimer with protein S19. Forms two bridges to the 50S subunit in the 70S ribosome.

In terms of biological role, located at the top of the head of the 30S subunit, it contacts several helices of the 16S rRNA. In the 70S ribosome it contacts the 23S rRNA (bridge B1a) and protein L5 of the 50S subunit (bridge B1b), connecting the 2 subunits; these bridges are implicated in subunit movement. Contacts the tRNAs in the A and P-sites. The sequence is that of Small ribosomal subunit protein uS13 from Cutibacterium acnes (strain DSM 16379 / KPA171202) (Propionibacterium acnes).